A 65-amino-acid chain; its full sequence is Cold shock-like protein CspC (65 aa).

The CSD domain maps to 3–62 (GRVKWFNAEKGFGFIEREDGDDVFVHFSAIQQDGYKSLEEGQQVEFDIVDGARGPQAANV).

In terms of assembly, homodimer.

Its subcellular location is the cytoplasm. In Bacillus cereus, this protein is Cold shock-like protein CspC (cspC).